The following is a 192-amino-acid chain: NADH dehydrogenase [ubiquinone] iron-sulfur protein 3 (192 aa).

The protein belongs to the complex I 30 kDa subunit family. In terms of assembly, complex I is composed of about 45 different subunits. This is a component of the iron-sulfur (IP) fragment of the enzyme.

Its subcellular location is the mitochondrion inner membrane. The catalysed reaction is a ubiquinone + NADH + 5 H(+)(in) = a ubiquinol + NAD(+) + 4 H(+)(out). Core subunit of the mitochondrial membrane respiratory chain NADH dehydrogenase (Complex I) that is believed to belong to the minimal assembly required for catalysis. Complex I functions in the transfer of electrons from NADH to the respiratory chain. The immediate electron acceptor for the enzyme is believed to be ubiquinone. The protein is NADH dehydrogenase [ubiquinone] iron-sulfur protein 3 (NAD9) of Beta vulgaris (Sugar beet).